The chain runs to 263 residues: Neuferricin (263 aa).

The N-terminal stretch at 1–22 is a signal peptide; sequence MLRICGLGVVLSLAVAAVAVMA. Residues 35–134 enclose the Cytochrome b5 heme-binding domain; that stretch reads IRLFLPEELA…KNYVFVGRLV (100 aa). Residues 220-249 form a disordered region; the sequence is VRTTGPPSDQQDNPRHSNHGDLDNPNLEEY. Residues 231 to 241 show a composition bias toward basic and acidic residues; that stretch reads DNPRHSNHGDL.

This sequence belongs to the cytochrome b5 family. MAPR subfamily. As to expression, expressed in various tissues including brain, heart, adrenal gland, and kidney. In the brain, mainly expressed in pyramidal cells around the CA3 region of Ammon horn in hippocampus. Present in brain (at protein level).

The protein localises to the secreted. In terms of biological role, heme-binding protein which promotes neuronal but not astrocyte differentiation. In Mus musculus (Mouse), this protein is Neuferricin.